Consider the following 93-residue polypeptide: Small ribosomal subunit protein uS19 (93 aa).

The protein belongs to the universal ribosomal protein uS19 family.

Functionally, protein S19 forms a complex with S13 that binds strongly to the 16S ribosomal RNA. The sequence is that of Small ribosomal subunit protein uS19 from Limosilactobacillus fermentum (strain NBRC 3956 / LMG 18251) (Lactobacillus fermentum).